The chain runs to 117 residues: Putative phosphotransferase enzyme IIB component MPN_268 (117 aa).

Residues 1-21 traverse the membrane as a helical segment; it reads MKVLLWIGYVLSFGLLYLYLV. A PTS EIIB type-1 domain is found at 42 to 117; it reads PFAVRDFIAA…QLKQQIENER (76 aa).

The protein localises to the membrane. The phosphoenolpyruvate-dependent sugar phosphotransferase system (PTS), a major carbohydrate active -transport system, catalyzes the phosphorylation of incoming sugar substrates concomitant with their translocation across the cell membrane. This chain is Putative phosphotransferase enzyme IIB component MPN_268, found in Mycoplasma pneumoniae (strain ATCC 29342 / M129 / Subtype 1) (Mycoplasmoides pneumoniae).